The following is a 311-amino-acid chain: Putative HTH-type transcriptional regulatory protein PTO0557 (311 aa).

The region spanning 132 to 186 (MRRIRELKGYSVGYLSSKLGISRRSISLYESGSSATIDIYLKLEETLGEDLTKDI) is the HTH cro/C1-type domain. Positions 143 to 162 (VGYLSSKLGISRRSISLYES) form a DNA-binding region, H-T-H motif.

The protein is Putative HTH-type transcriptional regulatory protein PTO0557 of Picrophilus torridus (strain ATCC 700027 / DSM 9790 / JCM 10055 / NBRC 100828 / KAW 2/3).